Here is a 321-residue protein sequence, read N- to C-terminus: Phospho-N-acetylmuramoyl-pentapeptide-transferase (321 aa).

10 helical membrane passes run 1–21, 50–70, 76–96, 112–132, 140–160, 176–196, 200–220, 225–245, 250–270, and 300–320; these read MIFIYAIIALLITFILVPILI, MGGLTFLISIIISSIIAIIFV, IILLLFVTIGFGLIGFIDDYI, FLAQIIIAVIFFVLSDVFHLV, IPFVNFDIPLSFAYVIFIVFW, GLATGLSIIGFAMYAVMSYML, AIGIFCIIMIFALLGFLPYNL, VFMGDTGSLALGGIFATISIM, LSLILIGFVFVVETLSVMLQV, and VVTVFWTVGLITGLIGLWIGV.

It belongs to the glycosyltransferase 4 family. MraY subfamily. It depends on Mg(2+) as a cofactor.

The protein resides in the cell membrane. The catalysed reaction is UDP-N-acetyl-alpha-D-muramoyl-L-alanyl-gamma-D-glutamyl-L-lysyl-D-alanyl-D-alanine + di-trans,octa-cis-undecaprenyl phosphate = Mur2Ac(oyl-L-Ala-gamma-D-Glu-L-Lys-D-Ala-D-Ala)-di-trans,octa-cis-undecaprenyl diphosphate + UMP. The protein operates within cell wall biogenesis; peptidoglycan biosynthesis. Catalyzes the initial step of the lipid cycle reactions in the biosynthesis of the cell wall peptidoglycan: transfers peptidoglycan precursor phospho-MurNAc-pentapeptide from UDP-MurNAc-pentapeptide onto the lipid carrier undecaprenyl phosphate, yielding undecaprenyl-pyrophosphoryl-MurNAc-pentapeptide, known as lipid I. The chain is Phospho-N-acetylmuramoyl-pentapeptide-transferase from Staphylococcus epidermidis (strain ATCC 12228 / FDA PCI 1200).